A 2598-amino-acid chain; its full sequence is Partially reducing polyketide synthase men1 (2598 aa).

A Ketosynthase family 3 (KS3) domain is found at 7–435; it reads SQSIAIVGLS…GSNAHAILDD (429 aa). Residues Cys-181, His-316, and His-358 each act as for beta-ketoacyl synthase activity in the active site. Residues 450–459 show a composition bias toward basic residues; sequence GKSHHHHHQH. 2 disordered regions span residues 450–490 and 537–557; these read GKSH…NGTT and AEKQ…DPEK. Residues 474-490 show a composition bias toward low complexity; it reads VNGTSEVNGTSGVNGTT. The 305-residue stretch at 611–915 folds into the Malonyl-CoA:ACP transacylase (MAT) domain; sequence YVFTGQGAQW…RGPVTQILQS (305 aa). Positions 1008 to 1151 are N-terminal hotdog fold; it reads LGLIGAPMPN…GSVAVEFGAL (144 aa). Positions 1008–1325 constitute a PKS/mFAS DH domain; sequence LGLIGAPMPN…CVEMPSASGM (318 aa). The segment at 1009 to 1323 is dehydratase (DH) domain; sequence GLIGAPMPNF…LVCVEMPSAS (315 aa). A C-terminal hotdog fold region spans residues 1169–1325; the sequence is TISQEVDVFY…CVEMPSASGM (157 aa). Residues 1886–2197 enclose the Enoyl reductase (ER) domain; it reads GMLNTLCFEI…ARSRQDKIVI (312 aa). The region spanning 2222-2399 is the Ketoreductase (KR) domain; sequence TYLIAGGLGG…AATIDLGIVK (178 aa). The Carrier domain occupies 2510–2587; it reads EAARLVSAAV…AFASDLAKKG (78 aa). Residue Ser-2547 is modified to O-(pantetheine 4'-phosphoryl)serine.

Pantetheine 4'-phosphate is required as a cofactor.

The protein operates within secondary metabolite biosynthesis. Functionally, partially reducing polyketide synthase; part of the gene cluster that mediates the biosynthesis of menisporopsin A, a bioactive macrocyclic polylactone. The biosynthesis of menisporopsin A is performed by a reducing (man1) and a non-reducing (men2) polyketide synthase that catalyze the formation of each menisporopsin A subunits, while the esterification and cyclolactonization activities are probably peformed by the unusual thioesterase domain of men2. First, a reduced diketide intermediate, 3-hydroxybutyryl-S-ACP is produced by men1 and transferred to men2; this is followed by a second reduced diketide which is further elongated using 3 units of malonyl-coA to form a reduced pentaketide. The cyclization of this intermediate by the PT domain forms the second subunit, 2,4-dihydroxy-6-(2-hydroxy-n-propyl)benzoyl-S-ACP. The TE domain of men2 then esterifies the secondary hydroxyl group on the side chain of the second subunit with the acyl-TE of the first subunit to form the first ester intermediate. This process occurs iteratively to form a linear tetraester intermediate. The final subunit is formed by a similar process, except that an extra malonyl-CoA is required in an additional elongation step to form a reduced hexaketide intermediate, and the carbonyl group next to the secondary hydroxyl group is reduced by a trans-acting ketoreductase. Again, the PT domain catalyzes cyclization to form the largest subunit, 2,4-dihydroxy-6-(2,4-dihydroxy-n-pentyl) benzoyl-S-ACP. Then the linear pentaester intermediate is formed. In this step, if the intermediate transfer rate is slow, intra- molecular cyclization involving the secondary hydroxyl group of the pentaester intermediate may occur to form menisporopsin B. Alternatively, transfer of the pentaester intermediate to the TE domain would allow cyclolactonization to be catalyzed by the TE to form menisporopsin A. The polypeptide is Partially reducing polyketide synthase men1 (Menisporopsis theobromae).